The sequence spans 371 residues: UDP-N-acetylglucosamine--N-acetylmuramyl-(pentapeptide) pyrophosphoryl-undecaprenol N-acetylglucosamine transferase (371 aa).

Residues 15 to 17, Asn-126, Arg-172, Ser-199, Ile-256, 275 to 280, and Gln-301 contribute to the UDP-N-acetyl-alpha-D-glucosamine site; these read TGG and ALTVSE.

The protein belongs to the glycosyltransferase 28 family. MurG subfamily.

The protein localises to the cell inner membrane. It catalyses the reaction di-trans,octa-cis-undecaprenyl diphospho-N-acetyl-alpha-D-muramoyl-L-alanyl-D-glutamyl-meso-2,6-diaminopimeloyl-D-alanyl-D-alanine + UDP-N-acetyl-alpha-D-glucosamine = di-trans,octa-cis-undecaprenyl diphospho-[N-acetyl-alpha-D-glucosaminyl-(1-&gt;4)]-N-acetyl-alpha-D-muramoyl-L-alanyl-D-glutamyl-meso-2,6-diaminopimeloyl-D-alanyl-D-alanine + UDP + H(+). Its pathway is cell wall biogenesis; peptidoglycan biosynthesis. Its function is as follows. Cell wall formation. Catalyzes the transfer of a GlcNAc subunit on undecaprenyl-pyrophosphoryl-MurNAc-pentapeptide (lipid intermediate I) to form undecaprenyl-pyrophosphoryl-MurNAc-(pentapeptide)GlcNAc (lipid intermediate II). This Francisella tularensis subsp. tularensis (strain FSC 198) protein is UDP-N-acetylglucosamine--N-acetylmuramyl-(pentapeptide) pyrophosphoryl-undecaprenol N-acetylglucosamine transferase.